The following is a 151-amino-acid chain: Multiprotein-bridging factor 1 (151 aa).

Disordered regions lie at residues 1–29 (MSDWDTNTIIGSRARAGGSGPRANVARSQ) and 78–98 (DPNVGRAISRARTDKKMSQKD). The interval 41–119 (VVSVDKKYGS…VNDYEAARAI (79 aa)) is essential for TBP-binding. Residues 85-139 (ISRARTDKKMSQKDLATKINEKPTVVNDYEAARAIPNQQVLSKLERALGVKLRGN) enclose the HTH cro/C1-type domain. The span at 88–98 (ARTDKKMSQKD) shows a compositional bias: basic and acidic residues. The segment at residues 96 to 115 (QKDLATKINEKPTVVNDYEA) is a DNA-binding region (H-T-H motif). Serine 143 bears the Phosphoserine mark.

This sequence belongs to the MBF1 family. Interacts with TBP and the transcription factor GCN4. Interacts with RPS3/us3.

The protein localises to the cytoplasm. It is found in the nucleus. Its function is as follows. Transcriptional coactivator that stimulates GCN4-dependent transcriptional activity by bridging the DNA-binding region of GCN4 and TBP (SPT15), thereby recruiting TBP to GCN4-bound promoters. Involved in induction of the ribosome quality control (RQC) pathway; a pathway that degrades nascent peptide chains during problematic translation. Required to prevent stalled ribosomes from frameshifting. This chain is Multiprotein-bridging factor 1 (MBF1), found in Saccharomyces cerevisiae (strain ATCC 204508 / S288c) (Baker's yeast).